The sequence spans 601 residues: MSTISIHHVGILRNPLPSKNKRALINNPWSLSLPRSSSASRLVKPCRISSKTDTNPAEITRRSANYEPSLWDFDYIQSLNGHQHYKKEKQLKREEELIVQVKMLLGTKMEAVKQLELIDDLKNLGLSYFFRDEIKKILTSIYNNSFENNNQVGDLYFTALGFRLLRQHGFNVSQRIFDCFKNEKGSHFDETLIGEDIKATLQLYETSFHLREGENTLELARQISTKYLQKMVDEGRINDENLSSWIRHSLDLPLHWRIQRLEARWSLDAYAAREDKNPLIFELAKLDFNIIQATQQEELKEVSRWWNDSCLAEKLPFVRDRVVECYFWAVGLFDCHDYGFQRKITAAVNILITAIDDVYDVYGTLDELQLFTDVIRRWDTQSIDQLPYYMQLCYLMLYNFVSSLGYDILKDRGINTILHLHQSWVSVVEAYLKEAEWYESGYAPSLEEYLSIATISIGLIPIVIPLDLSIPNSTIHRHTRIDHRHEILNLSGMVLRLADDLGTASSELERGDVPKAIQCYMKDTNASEEEAREHVRFLIGEAWKELNTAMAEPDDHPFTEQGAGAAANIGRAAQFIYLEGDGHAHFQNHQHLENLFFHPYV.

The N-terminal 35 residues, 1–35, are a transit peptide targeting the chloroplast; the sequence is MSTISIHHVGILRNPLPSKNKRALINNPWSLSLPR. Residues Asp356 and Asp360 each coordinate Mn(2+). Residues 356 to 360 carry the DDXXD motif motif; that stretch reads DDVYD. Homodimerization regions lie at residues 362–368 and 434–471; these read YGTLDEL and EAEW…LSIP. Mn(2+) contacts are provided by Asp499 and Glu507.

It belongs to the terpene synthase family. In terms of assembly, homodimer. Mn(2+) is required as a cofactor. Requires Mg(2+) as cofactor. As to expression, expressed in peltate glandular trichomes. Present at low levels in flowers and stems.

It localises to the plastid. The protein resides in the chloroplast. The enzyme catalyses (2E)-geranyl diphosphate = beta-phellandrene + diphosphate. The catalysed reaction is (2E)-geranyl diphosphate = (1R,5R)-sabinene + diphosphate. Its pathway is secondary metabolite biosynthesis; terpenoid biosynthesis. Involved in the biosynthesis of phenolic monoterpenes natural products. Monoterpene synthase that catalyzes mainly the formation of olefins such as sabinene and beta-phellandrene, and minor amounts of other monoterpenes (e.g. myrcene, gamma-terpinene, alpha-thujene and alpha-pinene) from geranyl diphosphate (GPP). This is Beta-phellandrene synthase from Origanum vulgare (Wild marjoram).